Here is a 458-residue protein sequence, read N- to C-terminus: F-box/WD repeat-containing protein 9 (458 aa).

An N-acetylmethionine modification is found at M1. Disordered regions lie at residues 1 to 30 (MELP…DAQA) and 42 to 64 (KSGL…SASE). The segment covering 16–26 (DDSDPESETDP) has biased composition (acidic residues). S18 carries the post-translational modification Phosphoserine. T55 bears the Phosphothreonine mark. Position 59 is a phosphoserine (S59). Positions 76–123 (EPGLLSLPPELLLEICSYLDARLVLHVLSRVCHALRDLVSDHVTWRLR) constitute an F-box domain. WD repeat units follow at residues 171 to 210 (GHVA…TESN), 220 to 261 (KRNS…QQFG), 264 to 301 (KASS…ALLK), 305 to 342 (LHSR…VLQR), 344 to 381 (QLDS…FQLI), 387 to 424 (GHSF…RTIC), and 427 to 458 (RHDN…RLQA).

In terms of assembly, interacts with SKP1 and CUL1.

Its function is as follows. Substrate-recognition component of the SCF (SKP1-CUL1-F-box protein)-type E3 ubiquitin ligase complex. This is F-box/WD repeat-containing protein 9 (FBXW9) from Homo sapiens (Human).